Consider the following 59-residue polypeptide: Cecropin-C (59 aa).

The first 23 residues, 1–23 (MNFKLIFLVALVLMAAFLGQTEG), serve as a signal peptide directing secretion. Val-58 carries the post-translational modification Valine amide.

The protein belongs to the cecropin family.

It localises to the secreted. Its function is as follows. Cecropins have lytic and antibacterial activity against several Gram-positive and Gram-negative bacteria. The polypeptide is Cecropin-C (CecC) (Anopheles gambiae (African malaria mosquito)).